A 240-amino-acid chain; its full sequence is NAD(P)H-quinone oxidoreductase subunit K (240 aa).

[4Fe-4S] cluster is bound by residues cysteine 55, cysteine 56, cysteine 120, and cysteine 151.

It belongs to the complex I 20 kDa subunit family. NDH-1 can be composed of about 15 different subunits; different subcomplexes with different compositions have been identified which probably have different functions. Requires [4Fe-4S] cluster as cofactor.

The protein resides in the cellular thylakoid membrane. It catalyses the reaction a plastoquinone + NADH + (n+1) H(+)(in) = a plastoquinol + NAD(+) + n H(+)(out). The enzyme catalyses a plastoquinone + NADPH + (n+1) H(+)(in) = a plastoquinol + NADP(+) + n H(+)(out). Functionally, NDH-1 shuttles electrons from an unknown electron donor, via FMN and iron-sulfur (Fe-S) centers, to quinones in the respiratory and/or the photosynthetic chain. The immediate electron acceptor for the enzyme in this species is believed to be plastoquinone. Couples the redox reaction to proton translocation, and thus conserves the redox energy in a proton gradient. Cyanobacterial NDH-1 also plays a role in inorganic carbon-concentration. The protein is NAD(P)H-quinone oxidoreductase subunit K of Trichodesmium erythraeum (strain IMS101).